The chain runs to 509 residues: AAA ATPase forming ring-shaped complexes (509 aa).

A coiled-coil region spans residues 11–50; that stretch reads AHLQRTISNLSARNAKLAELLKASRDKLSILQDQLEDLAA. 236–241 contacts ATP; that stretch reads GCGKTL.

It belongs to the AAA ATPase family. As to quaternary structure, homohexamer. Assembles into a hexameric ring structure.

The sequence is that of AAA ATPase forming ring-shaped complexes from Corynebacterium diphtheriae (strain ATCC 700971 / NCTC 13129 / Biotype gravis).